Here is a 265-residue protein sequence, read N- to C-terminus: Ubiquinone biosynthesis protein COQ4 homolog, mitochondrial (265 aa).

Positions 162, 163, 166, and 178 each coordinate Zn(2+).

This sequence belongs to the COQ4 family. In terms of assembly, component of a multi-subunit COQ enzyme complex. It depends on Zn(2+) as a cofactor.

It localises to the mitochondrion inner membrane. It catalyses the reaction a 4-hydroxy-3-methoxy-5-(all-trans-polyprenyl)benzoate + H(+) = a 2-methoxy-6-(all-trans-polyprenyl)phenol + CO2. It functions in the pathway cofactor biosynthesis; ubiquinone biosynthesis. Lyase that catalyzes the C1-decarboxylation of 4-hydroxy-3-methoxy-5-(all-trans-polyprenyl)benzoic acid into 2-methoxy-6-(all-trans-polyprenyl)phenol during ubiquinone biosynthesis. The sequence is that of Ubiquinone biosynthesis protein COQ4 homolog, mitochondrial from Drosophila willistoni (Fruit fly).